Reading from the N-terminus, the 229-residue chain is 7-cyano-7-deazaguanine synthase (229 aa).

8–18 contacts ATP; the sequence is FSGGQDSTTCL. Zn(2+) is bound by residues Cys187, Cys196, Cys199, and Cys202.

This sequence belongs to the QueC family. The cofactor is Zn(2+).

It catalyses the reaction 7-carboxy-7-deazaguanine + NH4(+) + ATP = 7-cyano-7-deazaguanine + ADP + phosphate + H2O + H(+). It functions in the pathway purine metabolism; 7-cyano-7-deazaguanine biosynthesis. Catalyzes the ATP-dependent conversion of 7-carboxy-7-deazaguanine (CDG) to 7-cyano-7-deazaguanine (preQ(0)). In Shewanella halifaxensis (strain HAW-EB4), this protein is 7-cyano-7-deazaguanine synthase.